The chain runs to 225 residues: Uracil-DNA glycosylase (225 aa).

The Proton acceptor role is filled by aspartate 65.

This sequence belongs to the uracil-DNA glycosylase (UDG) superfamily. UNG family.

The protein localises to the cytoplasm. The catalysed reaction is Hydrolyzes single-stranded DNA or mismatched double-stranded DNA and polynucleotides, releasing free uracil.. Its function is as follows. Excises uracil residues from the DNA which can arise as a result of misincorporation of dUMP residues by DNA polymerase or due to deamination of cytosine. The chain is Uracil-DNA glycosylase from Bacillus thuringiensis (strain Al Hakam).